Consider the following 762-residue polypeptide: Primary amine oxidase, lung isozyme (762 aa).

A signal peptide spans 1–16 (MFIFIFLSLWTLLVMG). Residues 23 to 54 (GSEEGVGKQCHPSLPPRCPSRSPSDQPWTHPD) form a disordered region. Asn136 carries an N-linked (GlcNAc...) asparagine glycan. A disulfide bridge connects residues Cys197 and Cys198. A glycan (O-linked (GalNAc...) threonine) is linked at Thr211. 2 N-linked (GlcNAc...) asparagine glycosylation sites follow: Asn231 and Asn293. Residue 383–393 (YMDACFGMGKF) coordinates substrate. Asp385 acts as the Proton acceptor in catalysis. A disulfide bridge connects residues Cys403 and Cys429. 467 to 472 (LLNYDY) serves as a coordination point for substrate. Tyr470 acts as the Schiff-base intermediate with substrate; via topaquinone in catalysis. Tyr470 carries the post-translational modification 2',4',5'-topaquinone. His519 and His521 together coordinate Cu cation. 4 residues coordinate Ca(2+): Asp528, Leu529, Asp530, and Glu571. Residue 577–584 (PLGGGSPR) participates in heparin binding. An N-linked (GlcNAc...) asparagine glycan is attached at Asn617. The Ca(2+) site is built by Phe662 and Asn664. N-linked (GlcNAc...) asparagine glycosylation is present at Asn665. Positions 666, 672, and 673 each coordinate Ca(2+). Residue His683 coordinates Cu cation. Cys733 and Cys740 are joined by a disulfide.

It belongs to the copper/topaquinone oxidase family. As to quaternary structure, homodimer; disulfide-linked. It depends on Cu cation as a cofactor. Ca(2+) serves as cofactor. Requires L-topaquinone as cofactor. In terms of processing, topaquinone (TPQ) is generated by copper-dependent autoxidation of a specific tyrosyl residue. Expressed in lung, spleen, heart and kidney.

The protein resides in the secreted. The protein localises to the extracellular space. It carries out the reaction a primary methyl amine + O2 + H2O = an aldehyde + H2O2 + NH4(+). The sequence is that of Primary amine oxidase, lung isozyme from Bos taurus (Bovine).